The chain runs to 191 residues: MPDALPPCSILILAGGRGQRMGGRDKGLVDWQGEPLIAHVHRAVRPLSDDLVISCNRNQAAYQAYADRLVGDAEADFPGPLAGVIAGLRVARHAWVVVLACDAPLVDRELIEGLLRLAVAGNSAAMVRQGGFWQPMFSVLPKRVLPVLEQAWAAGERSLQKALLREAVQGLECAESDRRLSNFNSPERLQD.

GTP is bound by residues 13 to 15 (LAG), Lys-26, Asp-72, and Asp-102. Asp-102 serves as a coordination point for Mg(2+).

It belongs to the MobA family. As to quaternary structure, monomer. Mg(2+) is required as a cofactor.

It localises to the cytoplasm. It carries out the reaction Mo-molybdopterin + GTP + H(+) = Mo-molybdopterin guanine dinucleotide + diphosphate. In terms of biological role, transfers a GMP moiety from GTP to Mo-molybdopterin (Mo-MPT) cofactor (Moco or molybdenum cofactor) to form Mo-molybdopterin guanine dinucleotide (Mo-MGD) cofactor. This is Molybdenum cofactor guanylyltransferase from Pseudomonas putida (strain ATCC 47054 / DSM 6125 / CFBP 8728 / NCIMB 11950 / KT2440).